A 110-amino-acid chain; its full sequence is Large ribosomal subunit protein uL22 (110 aa).

This sequence belongs to the universal ribosomal protein uL22 family. In terms of assembly, part of the 50S ribosomal subunit.

This protein binds specifically to 23S rRNA; its binding is stimulated by other ribosomal proteins, e.g. L4, L17, and L20. It is important during the early stages of 50S assembly. It makes multiple contacts with different domains of the 23S rRNA in the assembled 50S subunit and ribosome. Its function is as follows. The globular domain of the protein is located near the polypeptide exit tunnel on the outside of the subunit, while an extended beta-hairpin is found that lines the wall of the exit tunnel in the center of the 70S ribosome. The protein is Large ribosomal subunit protein uL22 of Photobacterium profundum (strain SS9).